Reading from the N-terminus, the 169-residue chain is Crossover junction endodeoxyribonuclease RuvC (169 aa).

Residues D13, E73, and D145 contribute to the active site. Mg(2+) is bound by residues D13, E73, and D145.

This sequence belongs to the RuvC family. Homodimer which binds Holliday junction (HJ) DNA. The HJ becomes 2-fold symmetrical on binding to RuvC with unstacked arms; it has a different conformation from HJ DNA in complex with RuvA. In the full resolvosome a probable DNA-RuvA(4)-RuvB(12)-RuvC(2) complex forms which resolves the HJ. Mg(2+) serves as cofactor.

Its subcellular location is the cytoplasm. The catalysed reaction is Endonucleolytic cleavage at a junction such as a reciprocal single-stranded crossover between two homologous DNA duplexes (Holliday junction).. Its function is as follows. The RuvA-RuvB-RuvC complex processes Holliday junction (HJ) DNA during genetic recombination and DNA repair. Endonuclease that resolves HJ intermediates. Cleaves cruciform DNA by making single-stranded nicks across the HJ at symmetrical positions within the homologous arms, yielding a 5'-phosphate and a 3'-hydroxyl group; requires a central core of homology in the junction. The consensus cleavage sequence is 5'-(A/T)TT(C/G)-3'. Cleavage occurs on the 3'-side of the TT dinucleotide at the point of strand exchange. HJ branch migration catalyzed by RuvA-RuvB allows RuvC to scan DNA until it finds its consensus sequence, where it cleaves and resolves the cruciform DNA. The sequence is that of Crossover junction endodeoxyribonuclease RuvC from Solidesulfovibrio magneticus (strain ATCC 700980 / DSM 13731 / RS-1) (Desulfovibrio magneticus).